The sequence spans 538 residues: Importin subunit alpha-4 (538 aa).

The IBB domain maps to 1–58; it reads MSLRPSTRAELRKKIYKTGVDADEARRRREDNLVEIRKNKREDSLLKKRREGMMLQQQ. ARM repeat units follow at residues 112–152, 155–194, 197–237, 239–278, 281–320, 323–363, 366–405, and 409–448; these read SPPI…NVAS, SDHTRVVIEQGAVPIFVKLLTSASDDVREQAVWALGNVAG, PNCR…NFCR, KPPTPFEQVKPALPILRQLIYLNDEEVLTDACWALSYLSD, NDKIQAVIEAGVCPRLVELLGHQSPTVLIPALRTVGNIVT, DSQT…NITA, KLQIEAVVGAGIILPLVHLLQNAEFDIKKEAAWAISNATS, and HEQIQYLVTQGCIKPLCDLLICPDPRIVTVCLEGLENILK.

Belongs to the importin alpha family. As to quaternary structure, forms a complex with importin subunit beta-1. Interacts with A.tumefaciens VirD2 and VirE2.

The protein localises to the nucleus envelope. In terms of biological role, binds to conventional NLS motifs and mediates nuclear protein import across the nuclear envelope. Acts as a cellular receptor for the nuclear import of the virD2 protein of Agrobacterium and is essential for Agrobacterium-mediated root transformation. The polypeptide is Importin subunit alpha-4 (Arabidopsis thaliana (Mouse-ear cress)).